The primary structure comprises 382 residues: Kelch domain-containing protein 3 (382 aa).

Kelch repeat units lie at residues R25–R77, T88–K138, I139–G189, H191–G249, and L251–D301.

Component of a CRL2(KLHDC3) complex, also named ECS(KLHDC3) complex, composed of CUL2, Elongin BC (ELOB and ELOC), RBX1 and substrate-specific adapter KLHDC3. May form oligomers as a KLHDC3-ELOB-ELOC complex; this interaction is likely autoinhibitory for the E3 ligase complex. In terms of tissue distribution, expressed specifically in testis, particularly in pachytene spermatocytes.

Its subcellular location is the cytoplasm. It functions in the pathway protein modification; protein ubiquitination. In terms of biological role, substrate-recognition component of a Cul2-RING (CRL2) E3 ubiquitin-protein ligase complex of the DesCEND (destruction via C-end degrons) pathway, which recognizes a C-degron located at the extreme C terminus of target proteins, leading to their ubiquitination and degradation. The C-degron recognized by the DesCEND pathway is usually a motif of less than ten residues and can be present in full-length proteins, truncated proteins or proteolytically cleaved forms. The CRL2(KLHDC3) complex specifically recognizes proteins with a glycine (Gly) at the C-terminus, leading to their ubiquitination and degradation: recognizes the C-terminal -Arg-(Xaa)n-Arg-Gly, -Arg-(Xaa)n-Lys-Gly, and -Arg-(Xaa)n-Gln-Gly degrons. The CRL2(KLHDC3) complex mediates ubiquitination and degradation of truncated SELENOV and SEPHS2 selenoproteins produced by failed UGA/Sec decoding, which end with a glycine. May be involved in meiotic recombination process. The polypeptide is Kelch domain-containing protein 3 (Mus musculus (Mouse)).